A 258-amino-acid polypeptide reads, in one-letter code: Hydroxyacylglutathione hydrolase (258 aa).

H52, H54, D56, H57, H109, D126, and H164 together coordinate Zn(2+).

This sequence belongs to the metallo-beta-lactamase superfamily. Glyoxalase II family. Monomer. Zn(2+) serves as cofactor.

The catalysed reaction is an S-(2-hydroxyacyl)glutathione + H2O = a 2-hydroxy carboxylate + glutathione + H(+). It functions in the pathway secondary metabolite metabolism; methylglyoxal degradation; (R)-lactate from methylglyoxal: step 2/2. In terms of biological role, thiolesterase that catalyzes the hydrolysis of S-D-lactoyl-glutathione to form glutathione and D-lactic acid. The chain is Hydroxyacylglutathione hydrolase from Xylella fastidiosa (strain 9a5c).